Reading from the N-terminus, the 498-residue chain is Ammonium transporter 1 member 1 (498 aa).

Transmembrane regions (helical) follow at residues 39 to 59 (LLFSAYLVFAMQLGFAMLCAG), 74 to 94 (VLDAAAGALFYYLFGFAFAFG), 120 to 140 (FFLFQWAFAIAAAGITSGSIA), 148 to 168 (YLIYSAFLTGFVYPVVSHWIW), 192 to 212 (FAGSGVVHMVGGVAGLWGALI), 236 to 256 (LVVLGTFLLWFGWYGFNPGSF), 274 to 296 (SGVGRTAVTTTLAGSVAALTTLF), 307 to 327 (VVDVCNGLLGGFAAITAGCSV), 331 to 351 (WAAIICGFVSAWVLIGLNALA), 360 to 380 (LEAAQLHGGCGAWGILFTALF), and 411 to 431 (VIQILVIFGWVSCTMGPLFYG).

The protein belongs to the ammonia transporter channel (TC 1.A.11.2) family. As to expression, expressed in roots and shoots.

Its subcellular location is the membrane. In terms of biological role, ammonium transporter probably involved in ammonium uptake from the soil. The protein is Ammonium transporter 1 member 1 (AMT1-1) of Oryza sativa subsp. japonica (Rice).